A 478-amino-acid chain; its full sequence is Proline--tRNA ligase (478 aa).

This sequence belongs to the class-II aminoacyl-tRNA synthetase family. ProS type 3 subfamily. Homodimer.

It localises to the cytoplasm. The catalysed reaction is tRNA(Pro) + L-proline + ATP = L-prolyl-tRNA(Pro) + AMP + diphosphate. In terms of biological role, catalyzes the attachment of proline to tRNA(Pro) in a two-step reaction: proline is first activated by ATP to form Pro-AMP and then transferred to the acceptor end of tRNA(Pro). The protein is Proline--tRNA ligase of Clostridium botulinum (strain Kyoto / Type A2).